A 165-amino-acid polypeptide reads, in one-letter code: Endoribonuclease YbeY (165 aa).

The Zn(2+) site is built by H130, H134, and H140.

It belongs to the endoribonuclease YbeY family. Zn(2+) serves as cofactor.

It is found in the cytoplasm. Single strand-specific metallo-endoribonuclease involved in late-stage 70S ribosome quality control and in maturation of the 3' terminus of the 16S rRNA. This chain is Endoribonuclease YbeY, found in Streptococcus gordonii (strain Challis / ATCC 35105 / BCRC 15272 / CH1 / DL1 / V288).